The chain runs to 442 residues: Decapping and exoribonuclease protein 1 (442 aa).

The segment covering 31–40 has biased composition (basic and acidic residues); it reads QSKLCKEKTT. Residues 31–56 form a disordered region; that stretch reads QSKLCKEKTTSDSSSSRKPSQQRDNY. The span at 41 to 53 shows a compositional bias: low complexity; that stretch reads SDSSSSRKPSQQR. Arg101 contributes to the substrate binding site. Glu255 is a binding site for a divalent metal cation. Substrate is bound at residue Glu293. A divalent metal cation is bound by residues Asp295, Glu306, and Leu307. Residues Lys308 and Gln330 each contribute to the substrate site.

The protein belongs to the DXO/Dom3Z family. It depends on a divalent metal cation as a cofactor.

The protein localises to the cytoplasm. It catalyses the reaction a 5'-end NAD(+)-phospho-ribonucleoside in mRNA + H2O = a 5'-end phospho-ribonucleoside in mRNA + NAD(+) + H(+). The enzyme catalyses a 5'-end (N(7)-methyl 5'-triphosphoguanosine)-ribonucleoside-ribonucleotide in mRNA + H2O = a (N(7)-methyl 5'-triphosphoguanosine)-nucleoside + a 5'-end phospho-ribonucleoside in mRNA + H(+). Decapping enzyme for NAD-capped RNAs: specifically hydrolyzes the nicotinamide adenine dinucleotide (NAD) cap from a subset of RNAs by removing the entire NAD moiety from the 5'-end of an NAD-capped RNA. The NAD-cap is present at the 5'-end of some RNAs and snoRNAs. In contrast to the canonical 5'-end N7 methylguanosine (m7G) cap, the NAD cap promotes mRNA decay. Also acts as a non-canonical decapping enzyme that removes the entire cap structure of m7G capped or incompletely capped RNAs. Has decapping activity toward incomplete 5'-end m7G cap mRNAs such as unmethylated 5'-end-capped RNA (cap0), while it has no activity toward 2'-O-ribose methylated m7G cap (cap1). Also has 5'-3' exonuclease activity. This is Decapping and exoribonuclease protein 1 (DXO1) from Saccharomyces cerevisiae (strain ATCC 204508 / S288c) (Baker's yeast).